We begin with the raw amino-acid sequence, 190 residues long: ATP synthase subunit b (190 aa).

The helical transmembrane segment at 4 to 24 (ILAPVLSLVLIAGVASPALAA) threads the bilayer.

It belongs to the ATPase B chain family. In terms of assembly, F-type ATPases have 2 components, F(1) - the catalytic core - and F(0) - the membrane proton channel. F(1) has five subunits: alpha(3), beta(3), gamma(1), delta(1), epsilon(1). F(0) has three main subunits: a(1), b(2) and c(10-14). The alpha and beta chains form an alternating ring which encloses part of the gamma chain. F(1) is attached to F(0) by a central stalk formed by the gamma and epsilon chains, while a peripheral stalk is formed by the delta and b chains.

It is found in the cell inner membrane. Functionally, f(1)F(0) ATP synthase produces ATP from ADP in the presence of a proton or sodium gradient. F-type ATPases consist of two structural domains, F(1) containing the extramembraneous catalytic core and F(0) containing the membrane proton channel, linked together by a central stalk and a peripheral stalk. During catalysis, ATP synthesis in the catalytic domain of F(1) is coupled via a rotary mechanism of the central stalk subunits to proton translocation. Component of the F(0) channel, it forms part of the peripheral stalk, linking F(1) to F(0). This is ATP synthase subunit b from Ruegeria pomeroyi (strain ATCC 700808 / DSM 15171 / DSS-3) (Silicibacter pomeroyi).